A 186-amino-acid chain; its full sequence is Probable chorismate pyruvate-lyase (186 aa).

Residues Arg-78, Leu-116, and Glu-175 each contribute to the substrate site.

It belongs to the UbiC family.

Its subcellular location is the cytoplasm. The catalysed reaction is chorismate = 4-hydroxybenzoate + pyruvate. Its pathway is cofactor biosynthesis; ubiquinone biosynthesis. Functionally, removes the pyruvyl group from chorismate, with concomitant aromatization of the ring, to provide 4-hydroxybenzoate (4HB) for the ubiquinone pathway. The polypeptide is Probable chorismate pyruvate-lyase (Psychromonas ingrahamii (strain DSM 17664 / CCUG 51855 / 37)).